The sequence spans 200 residues: Casparian strip membrane protein 1 (200 aa).

At 1-38 (MKSGDHAAIDVPESSAVAKGKAPLIATPREQKSGFKKG) the chain is on the cytoplasmic side. A helical transmembrane segment spans residues 39–59 (LGIFDFLLRLGAIIAALAAAA). Residues 60–86 (TMGTSDETLPFFTQFFQFEASYDDLPT) are Extracellular-facing. A helical membrane pass occupies residues 87-107 (FMFFVIAMALIGGYLVLSLPF). The Cytoplasmic segment spans residues 108 to 121 (SIVTIVRPHAVAPR). Residues 122 to 142 (LLLFILDIVALTLTTAAGAAA) form a helical membrane-spanning segment. The Extracellular portion of the chain corresponds to 143-171 (AAIVYLAHNGNPNTNWLAICQQFGDFCQE). The chain crosses the membrane as a helical span at residues 172–192 (VSGAVVASFVTVVVLMSLVLL). Topologically, residues 193 to 200 (SGVALKKH) are cytoplasmic.

The protein belongs to the Casparian strip membrane proteins (CASP) family. Homodimer and heterodimers.

Its subcellular location is the cell membrane. Functionally, regulates membrane-cell wall junctions and localized cell wall deposition. Required for establishment of the Casparian strip membrane domain (CSD) and the subsequent formation of Casparian strips, a cell wall modification of the root endodermis that determines an apoplastic barrier between the intraorganismal apoplasm and the extraorganismal apoplasm and prevents lateral diffusion. In Theobroma cacao (Cacao), this protein is Casparian strip membrane protein 1.